The following is a 644-amino-acid chain: Threonine--tRNA ligase (644 aa).

In terms of domain architecture, TGS spans 1-61 (MVAITLPDGS…AHDAKVEIVT (61 aa)). Residues 242 to 533 (DHRKIGKALN…LIENYAGWMP (292 aa)) are catalytic. Positions 333, 384, and 510 each coordinate Zn(2+).

Belongs to the class-II aminoacyl-tRNA synthetase family. Homodimer. The cofactor is Zn(2+).

It localises to the cytoplasm. The enzyme catalyses tRNA(Thr) + L-threonine + ATP = L-threonyl-tRNA(Thr) + AMP + diphosphate + H(+). Catalyzes the attachment of threonine to tRNA(Thr) in a two-step reaction: L-threonine is first activated by ATP to form Thr-AMP and then transferred to the acceptor end of tRNA(Thr). Also edits incorrectly charged L-seryl-tRNA(Thr). The protein is Threonine--tRNA ligase of Psychrobacter cryohalolentis (strain ATCC BAA-1226 / DSM 17306 / VKM B-2378 / K5).